The following is a 346-amino-acid chain: Holliday junction branch migration complex subunit RuvB (346 aa).

Residues 1-11 show a composition bias toward polar residues; sequence MTEQRTIASSA. The segment at 1-20 is disordered; it reads MTEQRTIASSATREDEAADA. The large ATPase domain (RuvB-L) stretch occupies residues 1 to 183; it reads MTEQRTIASS…FGIVQRLEFY (183 aa). Residues Ile22, Arg23, Gly64, Lys67, Thr68, Thr69, 130–132, Arg173, Tyr183, and Arg220 each bind ATP; that span reads EDF. Thr68 provides a ligand contact to Mg(2+). Positions 184–254 are small ATPAse domain (RuvB-S); it reads SPQELTRIVI…VAQAAMQMLK (71 aa). Residues 257 to 346 form a head domain (RuvB-H) region; the sequence is PEGFDELDRR…PAIGEPGDLF (90 aa). The DNA site is built by Arg293, Arg312, and Arg317.

This sequence belongs to the RuvB family. Homohexamer. Forms an RuvA(8)-RuvB(12)-Holliday junction (HJ) complex. HJ DNA is sandwiched between 2 RuvA tetramers; dsDNA enters through RuvA and exits via RuvB. An RuvB hexamer assembles on each DNA strand where it exits the tetramer. Each RuvB hexamer is contacted by two RuvA subunits (via domain III) on 2 adjacent RuvB subunits; this complex drives branch migration. In the full resolvosome a probable DNA-RuvA(4)-RuvB(12)-RuvC(2) complex forms which resolves the HJ.

It is found in the cytoplasm. It carries out the reaction ATP + H2O = ADP + phosphate + H(+). Its function is as follows. The RuvA-RuvB-RuvC complex processes Holliday junction (HJ) DNA during genetic recombination and DNA repair, while the RuvA-RuvB complex plays an important role in the rescue of blocked DNA replication forks via replication fork reversal (RFR). RuvA specifically binds to HJ cruciform DNA, conferring on it an open structure. The RuvB hexamer acts as an ATP-dependent pump, pulling dsDNA into and through the RuvAB complex. RuvB forms 2 homohexamers on either side of HJ DNA bound by 1 or 2 RuvA tetramers; 4 subunits per hexamer contact DNA at a time. Coordinated motions by a converter formed by DNA-disengaged RuvB subunits stimulates ATP hydrolysis and nucleotide exchange. Immobilization of the converter enables RuvB to convert the ATP-contained energy into a lever motion, pulling 2 nucleotides of DNA out of the RuvA tetramer per ATP hydrolyzed, thus driving DNA branch migration. The RuvB motors rotate together with the DNA substrate, which together with the progressing nucleotide cycle form the mechanistic basis for DNA recombination by continuous HJ branch migration. Branch migration allows RuvC to scan DNA until it finds its consensus sequence, where it cleaves and resolves cruciform DNA. In Xanthomonas campestris pv. campestris (strain 8004), this protein is Holliday junction branch migration complex subunit RuvB.